Here is a 382-residue protein sequence, read N- to C-terminus: Ribosomal RNA large subunit methyltransferase F (382 aa).

Disordered regions lie at residues 1–53 and 269–288; these read MTKP…LHRD and NRAS…KSQL. A compositionally biased stretch (basic residues) spans 8-24; that stretch reads ASRKPVTKSGRNSKRSR. The span at 269-286 shows a compositional bias: basic and acidic residues; the sequence is NRASKGHKLEPKAPKDKS.

This sequence belongs to the methyltransferase superfamily. METTL16/RlmF family.

Its subcellular location is the cytoplasm. It carries out the reaction adenosine(1618) in 23S rRNA + S-adenosyl-L-methionine = N(6)-methyladenosine(1618) in 23S rRNA + S-adenosyl-L-homocysteine + H(+). In terms of biological role, specifically methylates the adenine in position 1618 of 23S rRNA. The protein is Ribosomal RNA large subunit methyltransferase F of Shewanella woodyi (strain ATCC 51908 / MS32).